The chain runs to 433 residues: Sensor protein RstB (433 aa).

Topologically, residues 1–3 (MKK) are cytoplasmic. Residues 4 to 24 (LFIQFYLLLFVCFLVMSLLVG) form a helical membrane-spanning segment. Residues 25–135 (LVYKFTAERA…PYLYYLHQMR (111 aa)) lie on the Periplasmic side of the membrane. The helical transmembrane segment at 136-156 (LLDIALIAFIAISLAFPVFIW) threads the bilayer. Topologically, residues 157 to 433 (MRPHWQDMLK…WHNIPQFTSA (277 aa)) are cytoplasmic. The HAMP domain occupies 158 to 210 (RPHWQDMLKLEAAAQRFGDGHLNERIHFDEGSSFERLGVAFNQMADNINALIA). The Histidine kinase domain maps to 218–425 (GIAHELRTPL…RFSFSWPLWH (208 aa)). His-276 is subject to Phosphohistidine; by autocatalysis.

Autophosphorylated.

It localises to the cell inner membrane. It carries out the reaction ATP + protein L-histidine = ADP + protein N-phospho-L-histidine.. Its function is as follows. Member of the two-component regulatory system RstB/RstA. RstB functions as a membrane-associated protein kinase that phosphorylates RstA. In Escherichia coli (strain K12), this protein is Sensor protein RstB (rstB).